We begin with the raw amino-acid sequence, 276 residues long: Formamidopyrimidine-DNA glycosylase (276 aa).

Residue Pro2 is the Schiff-base intermediate with DNA of the active site. The active-site Proton donor is Glu3. Lys60 serves as the catalytic Proton donor; for beta-elimination activity. Residues His93, Arg112, and Arg155 each contribute to the DNA site. The segment at 240–274 (LVYGRKDEACTKCGAEIIRFVVGGRGTHICPDCQK) adopts an FPG-type zinc-finger fold. Arg264 functions as the Proton donor; for delta-elimination activity in the catalytic mechanism.

It belongs to the FPG family. In terms of assembly, monomer. Zn(2+) serves as cofactor.

It catalyses the reaction Hydrolysis of DNA containing ring-opened 7-methylguanine residues, releasing 2,6-diamino-4-hydroxy-5-(N-methyl)formamidopyrimidine.. The enzyme catalyses 2'-deoxyribonucleotide-(2'-deoxyribose 5'-phosphate)-2'-deoxyribonucleotide-DNA = a 3'-end 2'-deoxyribonucleotide-(2,3-dehydro-2,3-deoxyribose 5'-phosphate)-DNA + a 5'-end 5'-phospho-2'-deoxyribonucleoside-DNA + H(+). Functionally, involved in base excision repair of DNA damaged by oxidation or by mutagenic agents. Acts as a DNA glycosylase that recognizes and removes damaged bases. Has a preference for oxidized purines, such as 7,8-dihydro-8-oxoguanine (8-oxoG). Has AP (apurinic/apyrimidinic) lyase activity and introduces nicks in the DNA strand. Cleaves the DNA backbone by beta-delta elimination to generate a single-strand break at the site of the removed base with both 3'- and 5'-phosphates. This chain is Formamidopyrimidine-DNA glycosylase, found in Brevibacillus brevis (strain 47 / JCM 6285 / NBRC 100599).